We begin with the raw amino-acid sequence, 601 residues long: Glutamyl-tRNA(Gln) amidotransferase subunit B, mitochondrial (601 aa).

The N-terminal 55 residues, 1–55 (MLRPWLRQCPRATRSLACPQCHLPRPQTARRALRPLPALSLSHPIRSLQTTTTES), are a transit peptide targeting the mitochondrion.

It belongs to the GatB/GatE family. GatB subfamily. As to quaternary structure, subunit of the heterotrimeric GatCAB amidotransferase (AdT) complex, composed of A, B and C subunits.

It is found in the mitochondrion. It carries out the reaction L-glutamyl-tRNA(Gln) + L-glutamine + ATP + H2O = L-glutaminyl-tRNA(Gln) + L-glutamate + ADP + phosphate + H(+). Allows the formation of correctly charged Gln-tRNA(Gln) through the transamidation of misacylated Glu-tRNA(Gln) in the mitochondria. The reaction takes place in the presence of glutamine and ATP through an activated gamma-phospho-Glu-tRNA(Gln). This chain is Glutamyl-tRNA(Gln) amidotransferase subunit B, mitochondrial, found in Aspergillus niger (strain ATCC MYA-4892 / CBS 513.88 / FGSC A1513).